The chain runs to 155 residues: MIEKRTVCQIVEEWLEDKDYFLVEVTVSPDDKIVVEIDHAEGVWIEDCVELSRFIESKLNREEEDYELEVGSAGIGQPFKVLQQYYNHIGLEVEVLTKGGRKLSGVLKDADEEKFVVTVQKKVKPEGAKRPQLVEEDETFTYDDIKYTKYLISFK.

It belongs to the RimP family.

The protein localises to the cytoplasm. Its function is as follows. Required for maturation of 30S ribosomal subunits. The protein is Ribosome maturation factor RimP of Bacteroides fragilis (strain ATCC 25285 / DSM 2151 / CCUG 4856 / JCM 11019 / LMG 10263 / NCTC 9343 / Onslow / VPI 2553 / EN-2).